The chain runs to 609 residues: UvrABC system protein C (609 aa).

In terms of domain architecture, GIY-YIG spans 16 to 94 (SSAGVYRMYD…IKQYMPKYNV (79 aa)). The 36-residue stretch at 203-238 (QQVISALVDKMELAAERQAYEQAARFRDQIMALRKV) folds into the UVR domain.

This sequence belongs to the UvrC family. Interacts with UvrB in an incision complex.

Its subcellular location is the cytoplasm. Its function is as follows. The UvrABC repair system catalyzes the recognition and processing of DNA lesions. UvrC both incises the 5' and 3' sides of the lesion. The N-terminal half is responsible for the 3' incision and the C-terminal half is responsible for the 5' incision. This chain is UvrABC system protein C, found in Shewanella baltica (strain OS195).